The sequence spans 1223 residues: MLPYTVNFKVSARTLTGALNAHNKAAVDWGWQGLIAYGCHSLVVVIDSNTAQTLQVLEKHKADIVKVRWARENYHHNIGSPYCLRLASADVTGKIIVWDVAAGVAQCEIQEHVKPIQDVQWLWNQDASRDLLLAIHPPNYIVLWNADTGTKLWKKSYADNILSFSFDPFDPSHLTLLTSEGIVFISDFSPSKPPSGPGKKVYISSPHSSPAHNKLAAATGAKKALNKVKILITQEKPSADFVALNDCLQLAYLPSKRNHMLLLYPREILILDLEVNQTVGVIAIERTGVPFLQVIPCSQRDGLFCLHENGCITLRVRRSYNSICTTSNDEPDLDPVQELTYDLRSQCDAIRVTKTVRPFSMVCCPVNENAAALIVSDGRVMIWELKSAVCSRNARNSSGVSPLYSPVSFCGIPGGVLQNKLPDLSLDNMIGQSAIAGEEHPKGSILQEVHLKFLLTGLLSGLPSPQFAIRMCPPLTTKNIKTYQPLLAVGTSNGSVLVYHLTSGLLHKELSVHSCEVKGIEWTSLTSFLSFAASTPNNMGLVRNELQLVDLPTGRSTAFRGDRGNDESPIEMIKVSHLKQYLAVVFKDKPLELWDIRTCTLLREMSKSFPAITALEWSPSHNLKSLRKKQLATREAMARQTVVSDAELGAVESSVISLLQEAESKAELSQNISAREHFVFTDNDGQVYHLTVEGNSVKDSARIPPDGSMGSITCIAWKGDTLVLGDMDGNLNFWDLKARVSRGIPTHRSWVRKIRFAPGKGNQKLIAMYNDGAEVWDTKEVQMVSSLRSGRNVTFRILDVDWCTSDKVILASDDGCIRVLEMSMKSTCFRMDEQELVEPVWCPYLLVPRAALALKAFLLHQPWNGRYSLDISHIDYPENEEIKTLLQEQLHALSNDIKKLLLDPDFSLLQRCLLVSRLYGDESELHFWTVAAHYLHSLSQAKSGDTVVTKEGAPKDRLSNPLDICYDVLCENTYFQKFQLERVNLQEVKRSTYDHTRKCTDQLLLLGQTDRAVQLLLETSADNQHYYCDSLKACLVTTVTSSGPSQSTIKLVATNMIANGKLAEGVQLLCLIDKAADACRYLQTYGEWNRAAWLAKVRLNSEECADVLKRWVDHLCSPQVNQKSKALLVLLSLGCFVSVAETLHSMRYFDRAALFVEACLKYGAFEVSEDTEKLIAAIYADYARSLKSLGFRQGAVRFASKAGAAGRDLLNELGSTKEELTES.

2 WD repeats span residues 59-108 (KHKA…AQCE) and 111-154 (EHVK…KLWK). 2 positions are modified to phosphoserine: S205 and S209. A WD 3 repeat occupies 354–393 (KTVRPFSMVCCPVNENAAALIVSDGRVMIWELKSAVCSRN). A phosphoserine mark is found at S401 and S405. 6 WD repeats span residues 470–509 (RMCP…LHKE), 565–604 (NDES…LLRE), 707–744 (GSMG…SRGI), 746–786 (THRS…MVSS), 792–830 (NVTF…TCFR), and 892–939 (ALSN…HSLS).

In terms of assembly, component of the complex WDR11 composed of C17orf75, FAM91A1 and WDR11; FAM91A1 and WDR11 are required for proper location of the complex. Interacts with GLI3; the interaction associateS EMX1 with GLI3. Interacts with TBC1D23; this interaction may be indirect and recruits TBC1D23 to AP-1-derived vesicles. Interacts (via the N-terminal and the central portion of the protein) with EMX1. Broadly expressed in various organs including brain, eye,ear, lung, heart, kideny and gonads. Cerebral cortex. The entire developing central nervous system, except for the spinal cord, reveals expression. Expressed in the neuroepithelium, including the diencephalic region that gives rise to hypothalamic neurons. In the adult brain, intense expression is restricted to the olfactory bulb, the olfaction-related piriform cortex, the granule cell layer of the cerebellum, and neurons of the hippocampal formation. The brain demonstrated expression scattered throughout the hypothalamus, sometimes in clusters of neurons.

It is found in the cytoplasm. The protein localises to the cytoskeleton. It localises to the cilium basal body. The protein resides in the nucleus. Its subcellular location is the cilium axoneme. It is found in the cytoplasmic vesicle. The protein localises to the golgi apparatus. It localises to the trans-Golgi network. Its function is as follows. Involved in the Hedgehog (Hh) signaling pathway, is essential for normal ciliogenesis. Regulates the proteolytic processing of GLI3 and cooperates with the transcription factor EMX1 in the induction of downstream Hh pathway gene expression and gonadotropin-releasing hormone production. WDR11 complex facilitates the tethering of Adaptor protein-1 complex (AP-1)-derived vesicles. WDR11 complex acts together with TBC1D23 to facilitate the golgin-mediated capture of vesicles generated using AP-1. This is WD repeat-containing protein 11 (Wdr11) from Mus musculus (Mouse).